We begin with the raw amino-acid sequence, 1153 residues long: MAEPRGPVDHGVQIRFITEPAGDAQMRTGRRPAKDARANTYGVAVRVQGIAGQPFVVLNSGEKGSESFGVQIKGAHRQGPPGAPHSDLELPAEHSRPLAQENAGTWQGSVSDEELGDPWRGRLLRSQSQASLLGPAPLGPGHRSTSLLELGPPGLGAGSAIDTAPLSSVDTLIHKFDRHQGGQARGRTGRRMRALPAEQRKRSQSLDSRHLRDPPEDRRSPIPWAPPSRPGSAGSSKQPAPKPIPTSSYSRARQTQDWVLQNFEEPRTRAQDPAVLQFKSTPDLLRDQQEAAPPGSVEHVKAALYGILREGSSESDASVRRKVSLVLEQMQPLVMTTGSAKVLAGQGELAQKVEELQRKLDEEVKKRQVLEPSRLELEQQLEEKAEECLRLQELLERQKGETRQSGTELQNLRLLLDQAGRVRSELETQVMELQDQLKQGPVPAKEGLMKDLLETRELLEEVLEGKQRVEEQLRQRERELTALKGALKEEVASRDQEVEHVRQQCQRDTEQLRKSIQDASQDQAALEAERQKMSALVRGLQRELEETSEETGHWQTMFQKNKEELRAAKQELLQLRMEKDEMEEELGEKMEALQRELGQARAGAGGSRQVEELRKLQGEAERVRELEQQNLQLQKKTQQLSQDCAEATKARGARMAAEAEAALLVQRRTAVETTLQETQGENDEFRRRILGLEQQLKETRGLAEGGEAAEARLRDKLQRLEVEKQRLEEALSEAQAEEGSLAAAKRALEARLEEAQRGLSRMGQEQQALSRALEEEGKQREALRRGKAELEEQKRLLDRTVERLNKELEQIGEDSKQALHQLQSQLEDYKEKSRREVADAQRQAKEWASEAEKSSGGLSRLQDETQRLRQTLQASQADLDTARLDKELLAQRLQGLEQEAEKKRRSQDDRTRQVKSLEEKVSRLEMELDEERNTVELLTDRINRSRDQVDQLRTELMQERSARQDLECDKISLERQNKDLKGRLASLEGFQKPSASLSQLESQNRELQERLQAEDREKTVLQSTNRKLERRVKELSIQIDDERQHVNDQKDQLSLKVKALKRQVDEAEEEIERLDGLRKKAQRELEEQHEANEQLQARIRALEKDSWRKAARSAAESSLQQEGLSSDEEFDGVYNPNSIASLLTESGLQTSSC.

The interval 1 to 342 (MAEPRGPVDH…LVMTTGSAKV (342 aa)) is head. Residues 17-37 (ITEPAGDAQMRTGRRPAKDAR) are disordered. Residues 38-52 (ANTYGVAVRVQGIAG) carry the ZIM motif. The interval 44 to 57 (AVRVQGIAGQPFVV) is interaction with TJP1/ZO1. A phosphoserine mark is found at Ser-86, Ser-126, Ser-128, Ser-131, Ser-146, Ser-205, Ser-208, and Ser-324. Disordered regions lie at residues 131–151 (SLLG…LELG) and 177–253 (DRHQ…SRAR). The span at 207-220 (DSRHLRDPPEDRRS) shows a compositional bias: basic and acidic residues. Residues 343 to 1110 (LAGQGELAQK…ALEKDSWRKA (768 aa)) adopt a coiled-coil conformation. Lys-562 is subject to N6-acetyllysine. 3 disordered regions span residues 755–796 (AQRG…QKRL), 823–861 (QSQL…LSRL), and 1110–1131 (AARS…EEFD). Composition is skewed to basic and acidic residues over residues 772–796 (ALEE…QKRL) and 827–853 (EDYK…EAEK). Residues 1111 to 1153 (ARSAAESSLQQEGLSSDEEFDGVYNPNSIASLLTESGLQTSSC) form a tail region. Over residues 1115–1124 (AESSLQQEGL) the composition is skewed to polar residues. Phosphoserine is present on residues Ser-1125 and Ser-1126.

The protein belongs to the cingulin family. Homodimer. Interacts with TJP1/ZO1 and SPEF1.

It is found in the cell junction. Its subcellular location is the tight junction. Functionally, probably plays a role in the formation and regulation of the tight junction (TJ) paracellular permeability barrier. The protein is Cingulin of Sorex araneus (Eurasian common shrew).